The sequence spans 213 residues: Thiopurine S-methyltransferase (213 aa).

Positions 10, 45, 66, and 120 each coordinate S-adenosyl-L-methionine.

It belongs to the class I-like SAM-binding methyltransferase superfamily. TPMT family.

The protein localises to the cytoplasm. The catalysed reaction is S-adenosyl-L-methionine + a thiopurine = S-adenosyl-L-homocysteine + a thiopurine S-methylether.. This Photobacterium profundum (strain SS9) protein is Thiopurine S-methyltransferase.